The following is a 728-amino-acid chain: 1,4-alpha-glucan branching enzyme GlgB (728 aa).

Residue D405 is the Nucleophile of the active site. E458 (proton donor) is an active-site residue.

Belongs to the glycosyl hydrolase 13 family. GlgB subfamily. As to quaternary structure, monomer.

The catalysed reaction is Transfers a segment of a (1-&gt;4)-alpha-D-glucan chain to a primary hydroxy group in a similar glucan chain.. Its pathway is glycan biosynthesis; glycogen biosynthesis. In terms of biological role, catalyzes the formation of the alpha-1,6-glucosidic linkages in glycogen by scission of a 1,4-alpha-linked oligosaccharide from growing alpha-1,4-glucan chains and the subsequent attachment of the oligosaccharide to the alpha-1,6 position. The protein is 1,4-alpha-glucan branching enzyme GlgB of Klebsiella pneumoniae subsp. pneumoniae (strain ATCC 700721 / MGH 78578).